Reading from the N-terminus, the 398-residue chain is tRNA-specific 2-thiouridylase MnmA (398 aa).

ATP-binding positions include 20–27 (AMSGGVDS) and Leu-46. Cys-114 (nucleophile) is an active-site residue. Residues Cys-114 and Cys-210 are joined by a disulfide bond. Residue Gly-138 participates in ATP binding. The tract at residues 160-162 (RDQ) is interaction with tRNA. The active-site Cysteine persulfide intermediate is the Cys-210.

This sequence belongs to the MnmA/TRMU family.

The protein localises to the cytoplasm. The catalysed reaction is S-sulfanyl-L-cysteinyl-[protein] + uridine(34) in tRNA + AH2 + ATP = 2-thiouridine(34) in tRNA + L-cysteinyl-[protein] + A + AMP + diphosphate + H(+). In terms of biological role, catalyzes the 2-thiolation of uridine at the wobble position (U34) of tRNA, leading to the formation of s(2)U34. The protein is tRNA-specific 2-thiouridylase MnmA of Brucella abortus (strain S19).